The chain runs to 276 residues: Cell division protein FtsQ (276 aa).

Residues 1–27 lie on the Cytoplasmic side of the membrane; sequence MSQAALNTRNSEEEVSSRRNNGTRLAG. The helical transmembrane segment at 28–48 threads the bilayer; the sequence is ILFLLTVLTTVLVSGWVVLGW. The Periplasmic portion of the chain corresponds to 49–276; the sequence is MEDAQRLPLS…QQNQAQAEQQ (228 aa). Residues 55–126 enclose the POTRA domain; sequence LPLSKLVLTG…DELKIHLVEY (72 aa). The tract at residues 255 to 276 is disordered; that stretch reads GWAPLPPEESTQQQNQAQAEQQ. Residues 266–276 show a composition bias toward low complexity; it reads QQQNQAQAEQQ.

The protein belongs to the FtsQ/DivIB family. FtsQ subfamily. As to quaternary structure, part of a complex composed of FtsB, FtsL and FtsQ. The complex can be formed before its localization to the division site. This tripartite complex can be divided further into a subcomplex of FtsB and FtsL, which forms in the absence of FtsQ. Interacts with FtsA, FtsK, FtsL, FtsB, FtsW, FtsI, FtsN, FtsX and YmgF.

Its subcellular location is the cell inner membrane. Its function is as follows. Essential cell division protein. May link together the upstream cell division proteins, which are predominantly cytoplasmic, with the downstream cell division proteins, which are predominantly periplasmic. May control correct divisome assembly. The protein is Cell division protein FtsQ of Escherichia coli (strain K12).